Here is a 352-residue protein sequence, read N- to C-terminus: Protein RecA (352 aa).

67-74 (GPESSGKT) provides a ligand contact to ATP. The tract at residues 333–352 (DSTPDFAVDGNDAEETEQDF) is disordered. Residues 343 to 352 (NDAEETEQDF) show a composition bias toward acidic residues.

It belongs to the RecA family.

It localises to the cytoplasm. Can catalyze the hydrolysis of ATP in the presence of single-stranded DNA, the ATP-dependent uptake of single-stranded DNA by duplex DNA, and the ATP-dependent hybridization of homologous single-stranded DNAs. It interacts with LexA causing its activation and leading to its autocatalytic cleavage. The sequence is that of Protein RecA from Klebsiella pneumoniae (strain 342).